We begin with the raw amino-acid sequence, 588 residues long: Ribonuclease Y (588 aa).

The helical transmembrane segment at Val7–Val27 threads the bilayer. In terms of domain architecture, KH spans Val278 to Ala359. The region spanning Val404 to Gly497 is the HD domain.

This sequence belongs to the RNase Y family.

It localises to the cell membrane. In terms of biological role, endoribonuclease that initiates mRNA decay. The sequence is that of Ribonuclease Y from Salinispora tropica (strain ATCC BAA-916 / DSM 44818 / JCM 13857 / NBRC 105044 / CNB-440).